The following is a 430-amino-acid chain: N-lysine methyltransferase SMYD2-A (430 aa).

One can recognise an SET domain in the interval Glu-5–Ile-239. Lys-15–Arg-17 serves as a coordination point for S-adenosyl-L-methionine. Residues Cys-50, Cys-53, Cys-63, Cys-66, Cys-72, Cys-76, His-84, and Cys-88 each contribute to the Zn(2+) site. An MYND-type zinc finger spans residues Cys-50–Cys-88. S-adenosyl-L-methionine contacts are provided by residues His-135, Asn-204–His-205, and Tyr-256–Phe-258.

The protein belongs to the class V-like SAM-binding methyltransferase superfamily.

The protein resides in the cytoplasm. Its subcellular location is the cytosol. It localises to the nucleus. It catalyses the reaction L-lysyl(4)-[histone H3] + 3 S-adenosyl-L-methionine = N(6),N(6),N(6)-trimethyl-L-lysyl(4)-[histone H3] + 3 S-adenosyl-L-homocysteine + 3 H(+). It carries out the reaction L-lysyl-[protein] + S-adenosyl-L-methionine = N(6)-methyl-L-lysyl-[protein] + S-adenosyl-L-homocysteine + H(+). Its function is as follows. Protein-lysine N-methyltransferase that methylates both histones and non-histone proteins, including p53/TP53 and RB1. Specifically trimethylates histone H3 'Lys-4' (H3K4me3) in vivo. The activity requires interaction with HSP90alpha. Shows even higher methyltransferase activity on p53/TP53. Monomethylates 'Lys-370' of p53/TP53, leading to decreased DNA-binding activity and subsequent transcriptional regulation activity of p53/TP53. Monomethylates RB1 at 'Lys-860'. This is N-lysine methyltransferase SMYD2-A (smyd2-a) from Xenopus laevis (African clawed frog).